We begin with the raw amino-acid sequence, 570 residues long: Glycine--tRNA ligase (570 aa).

Substrate contacts are provided by arginine 99 and glutamate 165. ATP is bound by residues 197–199 (RNE), 207–212 (IRLREF), 324–325 (EC), and 443–446 (GIDR). 212 to 216 (FTQAE) is a substrate binding site. Position 439–443 (439–443 (EPSFG)) interacts with substrate.

It belongs to the class-II aminoacyl-tRNA synthetase family.

The protein localises to the cytoplasm. It carries out the reaction tRNA(Gly) + glycine + ATP = glycyl-tRNA(Gly) + AMP + diphosphate. Catalyzes the attachment of glycine to tRNA(Gly). This Pyrococcus horikoshii (strain ATCC 700860 / DSM 12428 / JCM 9974 / NBRC 100139 / OT-3) protein is Glycine--tRNA ligase.